The sequence spans 154 residues: Hemiasterlin resistant protein 1 (154 aa).

2 disordered regions span residues 1–64 and 86–109; these read MVRR…PGLM and GMFT…PAGA. Low complexity-rich tracts occupy residues 7 to 28, 48 to 57, and 96 to 109; these read ASPS…SSFA, TPMGAPMGAP, and AEQA…PAGA. One can recognise a CHCH domain in the interval 116 to 154; the sequence is SQPCEFEWRQFVDCAQNQSDVSLCNGFNDIFKQCKARYA. 2 consecutive short sequence motifs (cx9C motif) follow at residues 119–129 and 139–149; these read CEFEWRQFVDC and CNGFNDIFKQC. Cystine bridges form between cysteine 119/cysteine 149 and cysteine 129/cysteine 139.

The chain is Hemiasterlin resistant protein 1 (har-1) from Caenorhabditis elegans.